Here is a 419-residue protein sequence, read N- to C-terminus: Putative polyketide beta-ketoacyl synthase 2 (419 aa).

Residues 10-413 form the Ketosynthase family 3 (KS3) domain; that stretch reads TRRTAVTGIG…GSNAALVLRP (404 aa).

The protein belongs to the thiolase-like superfamily. Beta-ketoacyl-ACP synthases family.

It functions in the pathway antibiotic biosynthesis; curamycin biosynthesis. The protein is Putative polyketide beta-ketoacyl synthase 2 (curB) of Streptomyces cyaneus (Streptomyces curacoi).